We begin with the raw amino-acid sequence, 252 residues long: UPF0736 protein OB1207 (252 aa).

Belongs to the UPF0736 family.

This is UPF0736 protein OB1207 from Oceanobacillus iheyensis (strain DSM 14371 / CIP 107618 / JCM 11309 / KCTC 3954 / HTE831).